A 667-amino-acid polypeptide reads, in one-letter code: Beta-galactosidase LacA (667 aa).

Residue R109 coordinates substrate. C113 serves as a coordination point for Zn(2+). Residue N147 coordinates substrate. The active-site Proton donor is E148. C153, C155, and C158 together coordinate Zn(2+). E307 acts as the Nucleophile in catalysis. Residues W315 and 355 to 358 (EKFH) each bind substrate.

It belongs to the glycosyl hydrolase 42 family.

It catalyses the reaction Hydrolysis of terminal non-reducing beta-D-galactose residues in beta-D-galactosides.. In terms of biological role, hydrolyzes lactose, oNP-galactoside (oNPG), pNP-galactosidase (pNPG), pNP-mannoside, pNP-glucoside, pNP-fucoside, pNP-N-acetylglucosamide, but not pNP-arabinoside or 4-methylumbelliferyl-beta-galactopyranoside (MUG). Transgalactosylates lactose at 10 g/L, but not at 270 g/L. In Lactobacillus acidophilus, this protein is Beta-galactosidase LacA.